Reading from the N-terminus, the 70-residue chain is MISLPGVYLNEDDYNFDIALRRFKKQVEKAGILSEMKKRQHYEKPSVMRKKKKAAARKRLLKKIRKMNMA.

This sequence belongs to the bacterial ribosomal protein bS21 family.

The polypeptide is Small ribosomal subunit protein bS21 (Nitratidesulfovibrio vulgaris (strain ATCC 29579 / DSM 644 / CCUG 34227 / NCIMB 8303 / VKM B-1760 / Hildenborough) (Desulfovibrio vulgaris)).